A 782-amino-acid polypeptide reads, in one-letter code: Zinc finger and SCAN domain-containing protein 10 (782 aa).

Positions 1-37 (MLAEPVPDALEQEHPGAVKLEEDEVGEEDPRLAESRP) are disordered. Residues 1–71 (MLAEPVPDAL…GRLRELCNHW (71 aa)) form the SCAN box domain. Basic and acidic residues-rich tracts occupy residues 11 to 20 (EQEHPGAVKL) and 28 to 37 (EDPRLAESRP). Residues S160 and S206 each carry the phosphoserine modification. 2 disordered regions span residues 197–233 (LAPS…ENSR) and 290–321 (SQTE…TPAD). 14 consecutive C2H2-type zinc fingers follow at residues 292 to 315 (TEKP…STGW), 321 to 343 (DGSE…EMQF), 349 to 371 (GVNF…NLQP), 377 to 399 (SFRC…HMRT), 421 to 443 (LTKH…NQGF), 467 to 489 (EGKT…TFKR), 495 to 517 (RHLR…SLSS), 523 to 545 (PYVC…HTRR), 551 to 573 (RPFS…SHQQ), 579 to 601 (KPHA…RHLL), 607 to 629 (RPYH…RHVR), 635 to 657 (KPCR…RHQR), 669 to 691 (ICGH…TGER), and 697 to 719 (TCGR…TGSK). The segment covering 302 to 313 (LTQTVGQETSST) has biased composition (polar residues). Residue Q485 is modified to N5-methylglutamine. Residues 491-522 (SSLKRHLRNHAKDKDHLSSEDPGSLSSSQESN) are disordered. A compositionally biased stretch (basic and acidic residues) spans 500-509 (HAKDKDHLSS). Residues 510–521 (EDPGSLSSSQES) are compositionally biased toward low complexity.

In terms of assembly, interacts with POU5F1/OCT4 and SOX2. Methylated at Gln-485 by N6AMT1. As to expression, embryonic stem (ES) cell-specific. Not expressed in adult, except in testis.

It localises to the nucleus. Its function is as follows. Embryonic stem (ES) cell-specific transcription factor required to maintain ES cell pluripotency. Can both activate and /or repress expression of target genes, depending on the context. Specifically binds the 5'-[GA]CGCNNGCG[CT]-3' DNA consensus sequence. Regulates expression of POU5F1/OCT4, ZSCAN4 and ALYREF/THOC4. The chain is Zinc finger and SCAN domain-containing protein 10 (Zscan10) from Mus musculus (Mouse).